The sequence spans 407 residues: Cysteine desulfurase (407 aa).

Lys226 bears the N6-(pyridoxal phosphate)lysine mark. The Cysteine persulfide intermediate role is filled by Cys364.

This sequence belongs to the class-V pyridoxal-phosphate-dependent aminotransferase family. Csd subfamily. In terms of assembly, homodimer. Interacts with SufE and the SufBCD complex composed of SufB, SufC and SufD. The interaction with SufE is required to mediate the direct transfer of the sulfur atom from the S-sulfanylcysteine. Pyridoxal 5'-phosphate serves as cofactor.

Its subcellular location is the cytoplasm. The catalysed reaction is (sulfur carrier)-H + L-cysteine = (sulfur carrier)-SH + L-alanine. It catalyses the reaction L-selenocysteine + AH2 = hydrogenselenide + L-alanine + A + H(+). It participates in cofactor biosynthesis; iron-sulfur cluster biosynthesis. In terms of biological role, cysteine desulfurases mobilize the sulfur from L-cysteine to yield L-alanine, an essential step in sulfur metabolism for biosynthesis of a variety of sulfur-containing biomolecules. Component of the suf operon, which is activated and required under specific conditions such as oxidative stress and iron limitation. Acts as a potent selenocysteine lyase in vitro, that mobilizes selenium from L-selenocysteine. Selenocysteine lyase activity is however unsure in vivo. The polypeptide is Cysteine desulfurase (Pectobacterium atrosepticum (strain SCRI 1043 / ATCC BAA-672) (Erwinia carotovora subsp. atroseptica)).